The following is a 54-amino-acid chain: uncharacterized protein (54 aa).

Residues 6–26 (ILIYLLIFVAGIVIGKIRINV) form a helical membrane-spanning segment.

Its subcellular location is the host membrane. This is an uncharacterized protein from Acidianus convivator (ABV).